A 616-amino-acid chain; its full sequence is MTMRSAVFKAAAAPAGGNPEQRLDYERAAALGGPEDESGAAEAHFLPRHRKLKEPGPPLASSQGGSPSPSPAGCGGGKGRGLLLPAGAAPGQQEESWGGSVPLPCPPPATKQAGIGGEPVAAGAGCSPRPKYQAVLPIQTGSIVVAAAKEPTPWAGDKGGAAPPAATASDPAGPPPLPLPGPPPLAPTATAGTLAASEGRWKSIRKSPLGGGGGSGASSQAACLKQILLLQLDLIEQQQQQLQAKEKEIEELKSERDTLLARIERMERRMQLVKRDNEKERHKLLQGYEPEEREEAELSEKIKLERQPELCETSQALPSKPFSCGRSGKGHKRKTPFGNTERKTPVKKLAPEFSKVKTKTPKHSPIKEEPCGSISETVCKRELRSQETPEKPRSSVDTPPRLSTPQKGPSTHPKEKAFSSEMEDLPYLSTTEMYLCRWHQPPPSPLPLRESSPKKEETVARCLMPSSVAGETSVLAVPSWRDHSVEPLRDPNPSDILENLDDSVFSKRHAKLELDEKRRKRWDIQRIREQRILQRLQLRMYKKKGIQESEPEVTSFFPEPDDVESLLITPFLPVVAFGRPLPKLAPQNFELPWLDERSRCRLEIQKKHTPHRTCRK.

The tract at residues 1 to 116 (MTMRSAVFKA…PPATKQAGIG (116 aa)) is disordered. Residue Ser-66 is modified to Phosphoserine. The segment covering 81–91 (GLLLPAGAAPG) has biased composition (low complexity). Position 127 is a phosphoserine (Ser-127). Positions 152–218 (TPWAGDKGGA…LGGGGGSGAS (67 aa)) are disordered. Positions 153–171 (PWAGDKGGAAPPAATASDP) are enriched in low complexity. Residues 172-186 (AGPPPLPLPGPPPLA) are compositionally biased toward pro residues. Positions 187 to 196 (PTATAGTLAA) are enriched in low complexity. The residue at position 207 (Ser-207) is a Phosphoserine. Positions 215–284 (SGASSQAACL…RDNEKERHKL (70 aa)) form a coiled coil. Residues 225 to 239 (KQILLLQLDLIEQQQ) form an interaction with MSL2 region. Lys-303 participates in a covalent cross-link: Glycyl lysine isopeptide (Lys-Gly) (interchain with G-Cter in SUMO2). A disordered region spans residues 306-422 (RQPELCETSQ…PKEKAFSSEM (117 aa)). Residues 319–348 (SKPFSCGRSGKGHKRKTPFGNTERKTPVKK) carry the Nuclear localization signal motif. The residue at position 355 (Lys-355) is an N6-acetyllysine. A phosphothreonine mark is found at Thr-358 and Thr-360. Ser-364 is subject to Phosphoserine. Glycyl lysine isopeptide (Lys-Gly) (interchain with G-Cter in SUMO2) cross-links involve residues Lys-367 and Lys-380. The span at 378 to 394 (VCKRELRSQETPEKPRS) shows a compositional bias: basic and acidic residues. Ser-385 is modified (phosphoserine). Position 388 is a phosphothreonine (Thr-388). The residue at position 395 (Ser-395) is a Phosphoserine. Over residues 395–409 (SVDTPPRLSTPQKGP) the composition is skewed to polar residues. Phosphothreonine is present on residues Thr-398 and Thr-404. Phosphoserine is present on residues Ser-444, Ser-452, and Ser-484. Residues 474–593 (VLAVPSWRDH…LAPQNFELPW (120 aa)) form the PEHE domain. An interaction with KAT8 HAT domain region spans residues 498–516 (ENLDDSVFSKRHAKLELDE). A Bipartite nuclear localization signal motif is present at residues 507–521 (KRHAKLELDEKRRKR). The interaction with MSL3 MRG domain stretch occupies residues 552–593 (EVTSFFPEPDDVESLLITPFLPVVAFGRPLPKLAPQNFELPW).

It belongs to the msl-1 family. As to quaternary structure, component of a multisubunit histone acetyltransferase complex (MSL) at least composed of the KAT8/MOF/MYST1, MSL1/hampin, MSL2 and MSL3. Interacts (via PEHE domain) with KAT8 (via HAT domain) and MSL3 (via MRG domain); both interactions are direct. Directly interacts with MSL2 via its coiled coil domain. Directly interacts with NUPR1. Interacts with TP53BP1; this interaction may be required for MSL1 DNA repair activity, but not for histone acetyltransferase activity. Forms a MSL heterotetrameric core with MSL2. Isoform 1 and isoform 3 interact with TTC4. Isoform 1 interacts with ECM2 and PIHD1. Sumoylated with SUMO1. Isoform 3 and isoform 5 are testis-specific. Isoform 1 and isoform 4 are ubiquitously expressed. Isoform 2 is expressed at low levels in the testis and brain.

It is found in the nucleus. It localises to the nucleus speckle. The protein resides in the nucleoplasm. Non-catalytic component of the MSL histone acetyltransferase complex, a multiprotein complex that mediates the majority of histone H4 acetylation at 'Lys-16' (H4K16ac), an epigenetic mark that prevents chromatin compaction. The MSL complex is required for chromosome stability and genome integrity by maintaining homeostatic levels of H4K16ac. The MSL complex is also involved in gene dosage by promoting up-regulation of genes expressed by the X chromosome. X up-regulation is required to compensate for autosomal biallelic expression. The MSL complex also participates in gene dosage compensation by promoting expression of Tsix non-coding RNA. Within the MSL complex, acts as a scaffold to tether MSL3 and KAT8 together for enzymatic activity regulation. Greatly enhances MSL2 E3 ubiquitin ligase activity, promoting monoubiquitination of histone H2B at 'Lys-34' (H2BK34Ub). This modification in turn stimulates histone H3 methylation at 'Lys-4' (H3K4me) and 'Lys-79' (H3K79me) and leads to gene activation, including that of HOXA9 and MEIS1. In Mus musculus (Mouse), this protein is Male-specific lethal 1 homolog.